Reading from the N-terminus, the 399-residue chain is Elongation factor Tu (399 aa).

Residues 10-209 (KPHVNIGTIG…AVDDYIPTPA (200 aa)) enclose the tr-type G domain. A G1 region spans residues 19–26 (GHVDHGKT). 19–26 (GHVDHGKT) serves as a coordination point for GTP. T26 lines the Mg(2+) pocket. The G2 stretch occupies residues 60 to 64 (GITIA). The G3 stretch occupies residues 81–84 (DCPG). Residues 81 to 85 (DCPGH) and 136 to 139 (NKAD) contribute to the GTP site. Residues 136 to 139 (NKAD) form a G4 region. The G5 stretch occupies residues 174–176 (SAL).

The protein belongs to the TRAFAC class translation factor GTPase superfamily. Classic translation factor GTPase family. EF-Tu/EF-1A subfamily. In terms of assembly, monomer.

The protein localises to the cytoplasm. It catalyses the reaction GTP + H2O = GDP + phosphate + H(+). In terms of biological role, GTP hydrolase that promotes the GTP-dependent binding of aminoacyl-tRNA to the A-site of ribosomes during protein biosynthesis. This Campylobacter lari (strain RM2100 / D67 / ATCC BAA-1060) protein is Elongation factor Tu.